The chain runs to 227 residues: Cytidylate kinase (227 aa).

ATP is bound at residue 12 to 20; sequence GPSGAGKGT.

Belongs to the cytidylate kinase family. Type 1 subfamily.

It localises to the cytoplasm. The catalysed reaction is CMP + ATP = CDP + ADP. It carries out the reaction dCMP + ATP = dCDP + ADP. This is Cytidylate kinase from Salmonella choleraesuis (strain SC-B67).